We begin with the raw amino-acid sequence, 118 residues long: Large ribosomal subunit protein bL20 (118 aa).

The protein belongs to the bacterial ribosomal protein bL20 family.

In terms of biological role, binds directly to 23S ribosomal RNA and is necessary for the in vitro assembly process of the 50S ribosomal subunit. It is not involved in the protein synthesizing functions of that subunit. The sequence is that of Large ribosomal subunit protein bL20 from Stutzerimonas stutzeri (strain A1501) (Pseudomonas stutzeri).